The chain runs to 332 residues: Methionine import ATP-binding protein MetN (332 aa).

The ABC transporter domain occupies 2–239 (ITFQDVSKTY…PASDTARRFV (238 aa)). 36-43 (GASGAGKS) is a binding site for ATP.

This sequence belongs to the ABC transporter superfamily. Methionine importer (TC 3.A.1.24) family. In terms of assembly, the complex is composed of two ATP-binding proteins (MetN), two transmembrane proteins (MetI) and a solute-binding protein (MetQ).

It is found in the cell inner membrane. It catalyses the reaction L-methionine(out) + ATP + H2O = L-methionine(in) + ADP + phosphate + H(+). It carries out the reaction D-methionine(out) + ATP + H2O = D-methionine(in) + ADP + phosphate + H(+). Functionally, part of the ABC transporter complex MetNIQ involved in methionine import. Responsible for energy coupling to the transport system. The chain is Methionine import ATP-binding protein MetN from Caulobacter vibrioides (strain ATCC 19089 / CIP 103742 / CB 15) (Caulobacter crescentus).